The following is a 496-amino-acid chain: Solute carrier family 2, facilitated glucose transporter member 3 (496 aa).

Residues 1 to 10 lie on the Cytoplasmic side of the membrane; the sequence is MGTQKVTPAL. Residues 11–32 traverse the membrane as a helical segment; the sequence is IFAITVATIGSFQFGYNTGVIN. At 33–64 the chain is on the extracellular side; sequence APEKIIKEFINKTLTDKGNAPPSEVLLTSLWS. N-linked (GlcNAc...) asparagine glycosylation occurs at asparagine 43. A helical transmembrane segment spans residues 65-85; that stretch reads LSVAIFSVGGMIGSFSVGLFV. Residues 86–90 are Cytoplasmic-facing; that stretch reads NRFGR. A helical membrane pass occupies residues 91-111; the sequence is RNSMLIVNLLAVTGGCFMGLC. Over 112 to 118 the chain is Extracellular; that stretch reads KVAKSVE. The helical transmembrane segment at 119–142 threads the bilayer; that stretch reads MLILGRLVIGLFCGLCTGFVPMYI. Residues 143–153 are Cytoplasmic-facing; sequence GEISPTALRGA. Residues 154–174 traverse the membrane as a helical segment; it reads FGTLNQLGIVVGILVAQIFGL. A D-glucose-binding site is contributed by glutamine 159. Residues 175 to 183 lie on the Extracellular side of the membrane; that stretch reads EFILGSEEL. Residues 184–204 traverse the membrane as a helical segment; it reads WPLLLGFTILPAILQSAALPF. The Cytoplasmic portion of the chain corresponds to 205 to 269; sequence CPESPRFLLI…LFRVSSYRQP (65 aa). A Phosphothreonine modification is found at threonine 232. Residues 270 to 290 traverse the membrane as a helical segment; that stretch reads IIISIVLQLSQQLSGINAVFY. An important for selectivity against fructose region spans residues 277–279; that stretch reads QLS. D-glucose contacts are provided by residues 280–281 and asparagine 286; that span reads QQ. Residues 291–304 are Extracellular-facing; sequence YSTGIFKDAGVQEP. Residues 305-325 form a helical membrane-spanning segment; it reads IYATIGAGVVNTIFTVVSLFL. Asparagine 315 contacts D-glucose. The Cytoplasmic portion of the chain corresponds to 326 to 331; sequence VERAGR. A helical transmembrane segment spans residues 332 to 352; that stretch reads RTLHMIGLGGMAFCSTLMTVS. Over 353-363 the chain is Extracellular; that stretch reads LLLKDNYNGMS. A helical membrane pass occupies residues 364 to 389; that stretch reads FVCIGAILVFVAFFEIGPGPIPWFIV. 2 residues coordinate D-glucose: glutamate 378 and tryptophan 386. At 390-399 the chain is on the cytoplasmic side; that stretch reads AELFSQGPRP. Residues 400 to 420 traverse the membrane as a helical segment; that stretch reads AAMAVAGCSNWTSNFLVGLLF. Topologically, residues 421–429 are extracellular; that stretch reads PSAAHYLGA. A helical transmembrane segment spans residues 430–450; the sequence is YVFIIFTGFLITFLAFTFFKV. The Cytoplasmic portion of the chain corresponds to 451–496; it reads PETRGRTFEDITRAFEGQAHGADRSGKDGVMEMNSIEPAKETTTNV. 2 positions are modified to phosphoserine: serine 475 and serine 485. Threonine 492 is modified (phosphothreonine).

This sequence belongs to the major facilitator superfamily. Sugar transporter (TC 2.A.1.1) family. Glucose transporter subfamily. In terms of assembly, interacts with SMIM43; the interaction may promote SLC2A3-mediated glucose transport to meet the energy needs of mesendoderm differentiation. In terms of tissue distribution, highly expressed in brain. Expressed in many tissues.

It localises to the cell membrane. The protein localises to the perikaryon. Its subcellular location is the cell projection. The enzyme catalyses D-glucose(out) = D-glucose(in). It catalyses the reaction D-galactose(in) = D-galactose(out). Deoxyglucose transport is inhibited by D-glucose, D-galactose and maltose. Galactose transport is inhibited by D-glucose and maltose. Functionally, facilitative glucose transporter. Can also mediate the uptake of various other monosaccharides across the cell membrane. Mediates the uptake of glucose, 2-deoxyglucose, galactose, mannose, xylose and fucose, and probably also dehydroascorbate. Does not mediate fructose transport. Required for mesendoderm differentiation. The protein is Solute carrier family 2, facilitated glucose transporter member 3 of Homo sapiens (Human).